The primary structure comprises 734 residues: Cell surface glycoprotein gp138B (734 aa).

An N-terminal signal peptide occupies residues 1-20; it reads MKIILTLSIFLICFLQLGQS. Residues Asn-58, Asn-89, Asn-124, Asn-198, Asn-224, Asn-392, Asn-420, Asn-435, Asn-482, Asn-498, Asn-523, Asn-596, Asn-605, Asn-614, Asn-621, and Asn-630 are each glycosylated (N-linked (GlcNAc...) asparagine). Positions 504–592 constitute an IPT/TIG domain; that stretch reads PFIKSYGFLE…SSNEVTFYYF (89 aa). A disordered region spans residues 678-712; sequence GETPTPSTTPSTTPSTTPSTTPSSTPTQSPGDDGS. Over residues 680–712 the composition is skewed to low complexity; it reads TPTPSTTPSTTPSTTPSTTPSSTPTQSPGDDGS. Repeat copies occupy residues 683–686, 687–690, 691–694, and 695–698. The 4 X 4 AA tandem repeats of P-S-T-T stretch occupies residues 683-698; the sequence is PSTTPSTTPSTTPSTT. Gly-708 carries the GPI-like-anchor amidated glycine lipid modification. Residues 709-734 constitute a propeptide, removed in mature form; it reads DDGSTSSTLSISFYLITLLLLTQQFI.

In terms of processing, the sugar chains may play important roles in cell fusion. The GPI-like-anchor contains a phosphoceramide group, rather than a phosphatidyl group.

It localises to the cell membrane. In terms of biological role, involved in the sexual cell fusion of D.discoideum. The polypeptide is Cell surface glycoprotein gp138B (GP138B) (Dictyostelium discoideum (Social amoeba)).